Reading from the N-terminus, the 240-residue chain is 2,3,4,5-tetrahydropyridine-2,6-dicarboxylate N-acetyltransferase (240 aa).

Belongs to the transferase hexapeptide repeat family. DapH subfamily.

The enzyme catalyses (S)-2,3,4,5-tetrahydrodipicolinate + acetyl-CoA + H2O = L-2-acetamido-6-oxoheptanedioate + CoA. The protein operates within amino-acid biosynthesis; L-lysine biosynthesis via DAP pathway; LL-2,6-diaminopimelate from (S)-tetrahydrodipicolinate (acetylase route): step 1/3. Functionally, catalyzes the transfer of an acetyl group from acetyl-CoA to tetrahydrodipicolinate. The sequence is that of 2,3,4,5-tetrahydropyridine-2,6-dicarboxylate N-acetyltransferase from Bacillus anthracis (strain A0248).